Consider the following 862-residue polypeptide: DNA replication licensing factor MCM4 (862 aa).

Gly residues predominate over residues 1–12; sequence MASRGGGGGGDG. The tract at residues 1–132 is disordered; it reads MASRGGGGGG…GGGGGGAGAD (132 aa). Low complexity-rich tracts occupy residues 20-41 and 52-64; these read SSPDVRPSSPLPATNSSPPQSG and SASPYPSSPSLGG. The segment at 289-317 adopts a C4-type zinc-finger fold; the sequence is CLVCGFYSEPVMVDRGRVTEPHICQKEQC. The MCM domain maps to 453–659; it reads IYDRLTRSLA…QTDRRLAKHI (207 aa). An ATP-binding site is contributed by 503–510; it reads GDPGTSKS. The Arginine finger signature appears at 635 to 638; sequence SRFD.

This sequence belongs to the MCM family. Component of the minichromosome maintenance (MCM) complex, a heterotetramer composed of MCM2, MCM3, MCM4, MCM5, MCM6 and MCM7.

It localises to the nucleus. It carries out the reaction ATP + H2O = ADP + phosphate + H(+). Its function is as follows. Probable component of the MCM2-7 complex (MCM complex) that may function as a DNA helicase and which is essential to undergo a single round of replication initiation and elongation per cell cycle in eukaryotic cells. This chain is DNA replication licensing factor MCM4 (MCM4), found in Oryza sativa subsp. japonica (Rice).